Here is a 510-residue protein sequence, read N- to C-terminus: NAD(P)H-quinone oxidoreductase subunit 2, chloroplastic (510 aa).

A run of 12 helical transmembrane segments spans residues L24–L44, W59–W79, I99–I119, M124–C144, L149–Y169, L184–L204, I229–F249, W295–I315, M323–D343, G347–A367, A395–F415, and L418–L438.

It belongs to the complex I subunit 2 family. In terms of assembly, NDH is composed of at least 16 different subunits, 5 of which are encoded in the nucleus.

Its subcellular location is the plastid. The protein resides in the chloroplast thylakoid membrane. The enzyme catalyses a plastoquinone + NADH + (n+1) H(+)(in) = a plastoquinol + NAD(+) + n H(+)(out). It carries out the reaction a plastoquinone + NADPH + (n+1) H(+)(in) = a plastoquinol + NADP(+) + n H(+)(out). NDH shuttles electrons from NAD(P)H:plastoquinone, via FMN and iron-sulfur (Fe-S) centers, to quinones in the photosynthetic chain and possibly in a chloroplast respiratory chain. The immediate electron acceptor for the enzyme in this species is believed to be plastoquinone. Couples the redox reaction to proton translocation, and thus conserves the redox energy in a proton gradient. In Muilla maritima (Sea muilla), this protein is NAD(P)H-quinone oxidoreductase subunit 2, chloroplastic.